Consider the following 275-residue polypeptide: Myoblast determination protein 1 homolog (275 aa).

A bHLH domain is found at Asp84–Leu135. Positions Glu234–Leu275 are disordered. A compositionally biased stretch (polar residues) spans Leu249 to Leu275.

In terms of assembly, efficient DNA binding requires dimerization with another bHLH protein. As to expression, from mid-gastrula to just before somite formation, expressed in cells adjacent to axial mesoderm. Subsequently, during the anterior-to-posterior wave of somite formation and maturation, expressed within particular regions of each somite. Expressed in both muscle and non-muscle cells.

The protein localises to the nucleus. May act as a transcriptional activator that promotes transcription of muscle-specific target genes and plays a role in muscle differentiation. The sequence is that of Myoblast determination protein 1 homolog (myod1) from Danio rerio (Zebrafish).